A 354-amino-acid chain; its full sequence is 3-isopropylmalate dehydrogenase (354 aa).

NAD(+) is bound at residue 76–87; that stretch reads GPRWDGAKERPE. 4 residues coordinate substrate: Arg94, Arg104, Arg130, and Asp215. Residues Asp215, Asp239, and Asp243 each contribute to the Mg(2+) site. An NAD(+)-binding site is contributed by 273–285; it reads GSAPDIAGKNKAN.

This sequence belongs to the isocitrate and isopropylmalate dehydrogenases family. LeuB type 1 subfamily. In terms of assembly, homodimer. It depends on Mg(2+) as a cofactor. The cofactor is Mn(2+).

Its subcellular location is the cytoplasm. It carries out the reaction (2R,3S)-3-isopropylmalate + NAD(+) = 4-methyl-2-oxopentanoate + CO2 + NADH. It functions in the pathway amino-acid biosynthesis; L-leucine biosynthesis; L-leucine from 3-methyl-2-oxobutanoate: step 3/4. Catalyzes the oxidation of 3-carboxy-2-hydroxy-4-methylpentanoate (3-isopropylmalate) to 3-carboxy-4-methyl-2-oxopentanoate. The product decarboxylates to 4-methyl-2 oxopentanoate. This is 3-isopropylmalate dehydrogenase from Bacillus thuringiensis subsp. konkukian (strain 97-27).